The primary structure comprises 360 residues: UDP-N-acetylglucosamine--N-acetylmuramyl-(pentapeptide) pyrophosphoryl-undecaprenol N-acetylglucosamine transferase (360 aa).

UDP-N-acetyl-alpha-D-glucosamine-binding positions include 16-18 (TGG), N128, R165, S191, I247, 266-271 (ALTVSE), and Q292.

The protein belongs to the glycosyltransferase 28 family. MurG subfamily.

The protein resides in the cell inner membrane. It carries out the reaction di-trans,octa-cis-undecaprenyl diphospho-N-acetyl-alpha-D-muramoyl-L-alanyl-D-glutamyl-meso-2,6-diaminopimeloyl-D-alanyl-D-alanine + UDP-N-acetyl-alpha-D-glucosamine = di-trans,octa-cis-undecaprenyl diphospho-[N-acetyl-alpha-D-glucosaminyl-(1-&gt;4)]-N-acetyl-alpha-D-muramoyl-L-alanyl-D-glutamyl-meso-2,6-diaminopimeloyl-D-alanyl-D-alanine + UDP + H(+). The protein operates within cell wall biogenesis; peptidoglycan biosynthesis. Cell wall formation. Catalyzes the transfer of a GlcNAc subunit on undecaprenyl-pyrophosphoryl-MurNAc-pentapeptide (lipid intermediate I) to form undecaprenyl-pyrophosphoryl-MurNAc-(pentapeptide)GlcNAc (lipid intermediate II). The chain is UDP-N-acetylglucosamine--N-acetylmuramyl-(pentapeptide) pyrophosphoryl-undecaprenol N-acetylglucosamine transferase from Shewanella amazonensis (strain ATCC BAA-1098 / SB2B).